The following is a 161-amino-acid chain: Arachidonate 5-lipoxygenase-activating protein (161 aa).

Topologically, residues 1–8 are lumenal; sequence MDQETVGN. A helical transmembrane segment spans residues 9–30; that stretch reads VVLLAIVTLISVVQNGFFAHKV. At 31-52 the chain is on the cytoplasmic side; it reads EHESRTQNGRSFQRTGTLAFER. Residues 53-77 traverse the membrane as a helical segment; it reads VYTANQNCVDAYPTFLAVLWSAGLL. Residues 78 to 80 are Lumenal-facing; that stretch reads CSQ. A helical membrane pass occupies residues 81-102; it reads VPAAFAGLMYLLVRQKYFVGYL. The Cytoplasmic portion of the chain corresponds to 103 to 107; it reads GERTQ. The stretch at 108-115 is an intramembrane region; sequence STPGYIFG. A helical transmembrane segment spans residues 116-128; sequence KRIILFLFLMSVA. At 129–161 the chain is on the lumenal side; the sequence is GIFNYYLIFFFGSDFENYIKTVTTTISPLLLIP.

This sequence belongs to the MAPEG family. Homotrimer. Interacts with LTC4S and ALOX5.

It localises to the nucleus membrane. It is found in the endoplasmic reticulum membrane. In terms of biological role, required for leukotriene biosynthesis by ALOX5 (5-lipoxygenase). Anchors ALOX5 to the membrane. Binds arachidonic acid, and could play an essential role in the transfer of arachidonic acid to ALOX5. Binds to MK-886, a compound that blocks the biosynthesis of leukotrienes. In Macaca fascicularis (Crab-eating macaque), this protein is Arachidonate 5-lipoxygenase-activating protein (ALOX5AP).